A 322-amino-acid chain; its full sequence is Epiphycan (322 aa).

A signal peptide spans 1 to 19; the sequence is MGMLARVALGLIIIDAVLA. The tract at residues 58 to 108 is disordered; that stretch reads KVSERLSGNRELLTPGPQLGDNQDEDKDEESTPRLIDGSSPQEPEFPGLLG. Residue Ser64 is glycosylated (O-linked (Xyl...) (dermatan sulfate) serine). A glycan (O-linked (GalNAc...) serine) is linked at Ser96. An LRRNT domain is found at 106–143; the sequence is LLGPHTNEDFPTCLLCTCISTTVYCDDHELDAIPPLPK. Cys118 and Cys130 form a disulfide bridge. 5 LRR repeats span residues 144–165, 168–189, 192–213, 238–258, and 259–280; these read KTTY…DFAS, DLKR…AFRK, HLQE…PNTL, DLHH…PLPE, and SLRA…TFCN. Residues Cys279 and Cys312 are joined by a disulfide bond. N-linked (GlcNAc...) asparagine glycans are attached at residues Asn283 and Asn302. Residues 290 to 310 form an LRR 6 repeat; sequence ALEDIRLDGNPINLSRTPQAY.

Belongs to the small leucine-rich proteoglycan (SLRP) family. SLRP class III subfamily. In terms of processing, the O-linked polysaccharide on Ser-96 is probably the mucin type linked to GalNAc. There is one glycosaminoglycan chain, known to be dermatan sulfate, and it is probably the O-glycosylation at Ser-64. Confined to the middle zone of embryonic epiphyseal cartilage consisting of flattened chondrocytes and the ossifying region in the limb buds of chick embryos. Has also been detected in testis.

It is found in the secreted. The protein localises to the extracellular space. Its subcellular location is the extracellular matrix. Its function is as follows. May have a role in bone formation and also in establishing the ordered structure of cartilage through matrix organization. The sequence is that of Epiphycan (Epyc) from Mus musculus (Mouse).